Consider the following 165-residue polypeptide: 6,7-dimethyl-8-ribityllumazine synthase 2 (165 aa).

Residues Trp-24, 56–58, and 80–82 contribute to the 5-amino-6-(D-ribitylamino)uracil site; these read SFE and LVV. The active-site Proton donor is the Arg-88. Residue Ser-113 participates in 5-amino-6-(D-ribitylamino)uracil binding. His-127 serves as a coordination point for (2S)-2-hydroxy-3-oxobutyl phosphate.

The protein belongs to the DMRL synthase family.

The catalysed reaction is (2S)-2-hydroxy-3-oxobutyl phosphate + 5-amino-6-(D-ribitylamino)uracil = 6,7-dimethyl-8-(1-D-ribityl)lumazine + phosphate + 2 H2O + H(+). It participates in cofactor biosynthesis; riboflavin biosynthesis; riboflavin from 2-hydroxy-3-oxobutyl phosphate and 5-amino-6-(D-ribitylamino)uracil: step 1/2. Catalyzes the formation of 6,7-dimethyl-8-ribityllumazine by condensation of 5-amino-6-(D-ribitylamino)uracil with 3,4-dihydroxy-2-butanone 4-phosphate. This is the penultimate step in the biosynthesis of riboflavin. In Bradyrhizobium diazoefficiens (strain JCM 10833 / BCRC 13528 / IAM 13628 / NBRC 14792 / USDA 110), this protein is 6,7-dimethyl-8-ribityllumazine synthase 2.